Reading from the N-terminus, the 84-residue chain is Cell division topological specificity factor (84 aa).

It belongs to the MinE family.

In terms of biological role, prevents the cell division inhibition by proteins MinC and MinD at internal division sites while permitting inhibition at polar sites. This ensures cell division at the proper site by restricting the formation of a division septum at the midpoint of the long axis of the cell. The chain is Cell division topological specificity factor from Paraburkholderia phytofirmans (strain DSM 17436 / LMG 22146 / PsJN) (Burkholderia phytofirmans).